The following is a 467-amino-acid chain: MSSAPTTPPSVDKVDGFSRKSVRKARQKRSQSSSQFRSQGKPIELTPLPLLKDVPSSEQPELFLKKLQQCCVIFDFMDTLSDLKMKEYKRSTLNELVDYITISRGCLTEQTYPEVVRMVSCNIFRTLPPSDSNEFDPEEDEPTLEASWPHLQLVYEFFIRFLESQEFQPSIAKKYIDQKFVLQLLELFDSEDPRERDYLKTVLHRIYGKFLGLRAFIRKQINNIFLRFVYETEHFNGVAELLEILGSIINGFALPLKAEHKQFLVKVLIPLHTVRSLSLFHAQLAYCIVQFLEKDPSLTEPVIRGLMKFWPKTCSQKEVMFLGELEEILDVIEPSQFVKIQEPLFKQIAKCVSSPHFQVAERALYYWNNEYIMSLIEENSNVILPIMFSSLYRISKEHWNPAIVALVYNVLKAFMEMNSTMFDELTATYKSDRQREKKKEKEREELWKKLEDLELKRGLRRDGIIPT.

Positions 1 to 40 (MSSAPTTPPSVDKVDGFSRKSVRKARQKRSQSSSQFRSQG) are disordered. N-acetylserine is present on Ser2. A Phosphothreonine modification is found at Thr7. A compositionally biased stretch (basic residues) spans 20–29 (KSVRKARQKR). Residues Ser30, Ser32, and Ser34 each carry the phosphoserine modification. Residues 30 to 40 (SQSSSQFRSQG) are compositionally biased toward low complexity.

It belongs to the phosphatase 2A regulatory subunit B56 family. In terms of assembly, found in a complex with at least ARL2, PPP2CB; PPP2R1A, PPP2R2A, PPP2R5E and TBCD. PP2A consists of a common heterodimeric core enzyme, composed of a 36 kDa catalytic subunit (subunit C) and a 65 kDa constant regulatory subunit (PR65 or subunit A), that associates with a variety of regulatory subunits. Proteins that associate with the core dimer include three families of regulatory subunits B (the R2/B/PR55/B55, R3/B''/PR72/PR130/PR59 and R5/B'/B56 families), the 48 kDa variable regulatory subunit, viral proteins, and cell signaling molecules. Interacts with SGO1. Phosphorylated on serine residues.

The protein resides in the cytoplasm. In terms of biological role, the B regulatory subunit might modulate substrate selectivity and catalytic activity, and might also direct the localization of the catalytic enzyme to a particular subcellular compartment. The polypeptide is Serine/threonine-protein phosphatase 2A 56 kDa regulatory subunit epsilon isoform (PPP2R5E) (Homo sapiens (Human)).